Consider the following 197-residue polypeptide: NAD(P)H-quinone oxidoreductase subunit 6, chloroplastic (197 aa).

Transmembrane regions (helical) follow at residues 10–30 (FVLA…VLLV), 39–59 (LGLV…DFVA), 60–80 (AAQL…AVMI), 94–114 (IGYI…SFVI), and 147–167 (LLGE…AALV).

Belongs to the complex I subunit 6 family. In terms of assembly, NDH is composed of at least 16 different subunits, 5 of which are encoded in the nucleus.

Its subcellular location is the plastid. It is found in the chloroplast thylakoid membrane. The catalysed reaction is a plastoquinone + NADH + (n+1) H(+)(in) = a plastoquinol + NAD(+) + n H(+)(out). The enzyme catalyses a plastoquinone + NADPH + (n+1) H(+)(in) = a plastoquinol + NADP(+) + n H(+)(out). Its function is as follows. NDH shuttles electrons from NAD(P)H:plastoquinone, via FMN and iron-sulfur (Fe-S) centers, to quinones in the photosynthetic chain and possibly in a chloroplast respiratory chain. The immediate electron acceptor for the enzyme in this species is believed to be plastoquinone. Couples the redox reaction to proton translocation, and thus conserves the redox energy in a proton gradient. In Adiantum capillus-veneris (Maidenhair fern), this protein is NAD(P)H-quinone oxidoreductase subunit 6, chloroplastic (ndhG).